The chain runs to 277 residues: MDTNRPGAFVLSSAPLAALHNMAEMKTSLFPYALQGPAGFKAPALGGLGAQLPLGTPHGISDILGRPVGAAGGGLLGGLPRLNGLASSAGVYFGPAAAVARGYPKPLAELPGRPPIFWPGVVQGAPWRDPRLAGPAPAGGVLDKDGKKKHSRPTFSGQQIFALEKTFEQTKYLAGPERARLAYSLGMTESQVKVWFQNRRTKWRKRHAVEMASAKKKQDSDAEKLKVGGSDAEDDDEYNRPLDPNSDDEKITRLLKKHKPSNLALVSPCGGGAGDAL.

Residues 89–142 are repressor domain; that stretch reads AGVYFGPAAAVARGYPKPLAELPGRPPIFWPGVVQGAPWRDPRLAGPAPAGGVL. Disordered regions lie at residues 132-155 and 210-250; these read LAGPAPAGGVLDKDGKKKHSRPTF and EMAS…DDEK. A DNA-binding region (homeobox) is located at residues 148–207; the sequence is KKHSRPTFSGQQIFALEKTFEQTKYLAGPERARLAYSLGMTESQVKVWFQNRRTKWRKRH. The span at 216–226 shows a compositional bias: basic and acidic residues; it reads KKQDSDAEKLK.

Highest expression in brain.

The protein resides in the nucleus. Functionally, transcription factor with repressor activity involved in the regulation of axon-glial interactions at myelin paranodes in oligodendrocytes. Binds to the consensus DNA sequence 5'-(A/T)TTAATGA-3'. In oligodendrocytes, binds to MBP and PLP1 promoter regions. The sequence is that of Homeobox protein Nkx-6.2 (NKX6-2) from Homo sapiens (Human).